The primary structure comprises 181 residues: MSYTDIPAGNAIPDDFFTVIEIPANHSPIKYEVDKPSGQIFVDRFLSTPMFYPANYGFIPNTLSDDGDPLDVLVICPYPVSPGVVIRSRPVGVMYMTDEAGADAKVIAVPHEKLSSMYSNVKECSDLPALLLAQIQHFFENYKALEPGKWVKMGRWGSADEAREDIRKSVAAYNLKKEASK.

Residues K30, R44, and Y56 each coordinate substrate. Mg(2+) is bound by residues D66, D71, and D103. Y142 provides a ligand contact to substrate.

It belongs to the PPase family. Homohexamer. Mg(2+) is required as a cofactor.

The protein resides in the cytoplasm. The enzyme catalyses diphosphate + H2O = 2 phosphate + H(+). Catalyzes the hydrolysis of inorganic pyrophosphate (PPi) forming two phosphate ions. This Pseudomonas syringae pv. tomato (strain ATCC BAA-871 / DC3000) protein is Inorganic pyrophosphatase 2.